Reading from the N-terminus, the 411-residue chain is Glutamate dehydrogenase 3, mitochondrial (411 aa).

The N-terminal 18 residues, 1–18 (MNALAATSRNFRQAARLL), are a transit peptide targeting the mitochondrion. K102 is a catalytic residue.

This sequence belongs to the Glu/Leu/Phe/Val dehydrogenases family. Barely expressed in leaves, spikelets and roots. Glumes and stamens specific accumulation.

The protein localises to the mitochondrion. It catalyses the reaction L-glutamate + NAD(+) + H2O = 2-oxoglutarate + NH4(+) + NADH + H(+). The catalysed reaction is L-glutamate + NADP(+) + H2O = 2-oxoglutarate + NH4(+) + NADPH + H(+). The polypeptide is Glutamate dehydrogenase 3, mitochondrial (GDH3) (Oryza sativa subsp. japonica (Rice)).